The chain runs to 514 residues: Cardiolipin synthase 2 (514 aa).

3 consecutive transmembrane segments (helical) span residues 7–27 (LIFF…FIDV), 41–61 (ILGI…CVIF), and 71–91 (LTWL…YLLF). 2 PLD phosphodiesterase domains span residues 249 to 276 (INYR…GDEY) and 427 to 454 (EKGF…DMRS). Catalysis depends on residues H254, K256, D261, H432, K434, and D439.

It belongs to the phospholipase D family. Cardiolipin synthase subfamily.

Its subcellular location is the cell membrane. It catalyses the reaction 2 a 1,2-diacyl-sn-glycero-3-phospho-(1'-sn-glycerol) = a cardiolipin + glycerol. In terms of biological role, catalyzes the reversible phosphatidyl group transfer from one phosphatidylglycerol molecule to another to form cardiolipin (CL) (diphosphatidylglycerol) and glycerol. The sequence is that of Cardiolipin synthase 2 (cls2) from Bacillus cereus (strain ATCC 14579 / DSM 31 / CCUG 7414 / JCM 2152 / NBRC 15305 / NCIMB 9373 / NCTC 2599 / NRRL B-3711).